Here is a 568-residue protein sequence, read N- to C-terminus: MSISVFNRCWSKVILETLVRQGVAHFCIAPGSRSTPLTLEAIRLQDSHRVTCHTHFDERGLGFFALGLAKVSKKPVAVIVTSGTAAANLYPAIIEARQTGVNLIVLTADRPPELIECGANQAIVQPHMYADYPVASVNLPRPSQDYSADWLISRLEQACYQQARQPGVVHVNVPFAEPLYEASETDIEAHSWLVPIQRWLNQHKPWIQQQTDQKEVLMHANWDHWRTMRGVIVVGRLPVEQTMGIMAWANTMGWIALTDVQSSVEASLPYADIWLANQTVKQKLLQADIVIQFGSGFISKRVNQFLAAFKQEYWIVEQSTGLIDPNHHAHTRFNAKVHHWLRAHPPLRQKPWLLEPLALSKFCASFIEKQVGGNLNEASLAHHLDRILSNNGVLFLGNSLFVRLVDALAKLPEGYPVYTNRGASGIDGLLATAAGIGIGANQPLVAMIGDVSALYDINSLALFKKVTQPTIIFVINNNGGAIFDMLPVEADVKEKYYRMPHHLEFSQLVQTFDLKYARPYTWADLGAVLKVAYSRRETTLIEIKVGASDASTIYKRLIEQISYAVIGE.

The protein belongs to the TPP enzyme family. MenD subfamily. Homodimer. Mg(2+) serves as cofactor. Mn(2+) is required as a cofactor. The cofactor is thiamine diphosphate.

The catalysed reaction is isochorismate + 2-oxoglutarate + H(+) = 5-enolpyruvoyl-6-hydroxy-2-succinyl-cyclohex-3-ene-1-carboxylate + CO2. It participates in quinol/quinone metabolism; 1,4-dihydroxy-2-naphthoate biosynthesis; 1,4-dihydroxy-2-naphthoate from chorismate: step 2/7. It functions in the pathway quinol/quinone metabolism; menaquinone biosynthesis. Catalyzes the thiamine diphosphate-dependent decarboxylation of 2-oxoglutarate and the subsequent addition of the resulting succinic semialdehyde-thiamine pyrophosphate anion to isochorismate to yield 2-succinyl-5-enolpyruvyl-6-hydroxy-3-cyclohexene-1-carboxylate (SEPHCHC). This chain is 2-succinyl-5-enolpyruvyl-6-hydroxy-3-cyclohexene-1-carboxylate synthase, found in Pasteurella multocida (strain Pm70).